Consider the following 143-residue polypeptide: Transcriptional regulator MraZ (143 aa).

2 SpoVT-AbrB domains span residues 5–47 (EYSH…PQKE) and 76–119 (AAEC…SQEL).

This sequence belongs to the MraZ family. As to quaternary structure, forms oligomers.

Its subcellular location is the cytoplasm. It is found in the nucleoid. The polypeptide is Transcriptional regulator MraZ (Carboxydothermus hydrogenoformans (strain ATCC BAA-161 / DSM 6008 / Z-2901)).